The following is a 23-amino-acid chain: Potassium channel toxin kappa-KTx 2.3 (23 aa).

Intrachain disulfides connect Cys-4–Cys-22 and Cys-8–Cys-18.

It belongs to the short scorpion toxin superfamily. Potassium channel inhibitor kappa-KTx family. Kappa-KTx 2 subfamily. Expressed by the venom gland.

The protein localises to the secreted. Its function is as follows. Decreases the amplitude of the potassium current of the rat channels Kv1.1/KCNA1 by 33% and Kv1.2/KCNA2 by 8% as well as human Kv1.3/KCNA3 by 70%. This is Potassium channel toxin kappa-KTx 2.3 from Opisthacanthus madagascariensis (Scorpion).